Reading from the N-terminus, the 611-residue chain is Phosphoenolpyruvate carboxykinase [GTP] (611 aa).

Substrate contacts are provided by residues Arg82 and Tyr222–Gly224. Mn(2+) is bound by residues Lys231 and His251. Residue Ser273 coordinates substrate. Ala274 to Asn279 contributes to the GTP binding site. Cys275 is an active-site residue. Asp298 is a binding site for Mn(2+). Asn389–Arg391 provides a ligand contact to substrate. Residues Arg391, Arg422, and Phe517 to Asn520 contribute to the GTP site.

The protein belongs to the phosphoenolpyruvate carboxykinase [GTP] family. As to quaternary structure, monomer. It depends on Mn(2+) as a cofactor.

It localises to the cytoplasm. The enzyme catalyses oxaloacetate + GTP = phosphoenolpyruvate + GDP + CO2. It functions in the pathway carbohydrate biosynthesis; gluconeogenesis. Its function is as follows. Catalyzes the conversion of oxaloacetate (OAA) to phosphoenolpyruvate (PEP), the rate-limiting step in the metabolic pathway that produces glucose from lactate and other precursors derived from the citric acid cycle. This is Phosphoenolpyruvate carboxykinase [GTP] from Arthrobacter sp. (strain FB24).